Here is a 215-residue protein sequence, read N- to C-terminus: UPF0502 protein YceH (215 aa).

Belongs to the UPF0502 family.

This is UPF0502 protein YceH from Salmonella paratyphi C (strain RKS4594).